Here is a 122-residue protein sequence, read N- to C-terminus: Large ribosomal subunit protein bL19 (122 aa).

The protein belongs to the bacterial ribosomal protein bL19 family.

In terms of biological role, this protein is located at the 30S-50S ribosomal subunit interface and may play a role in the structure and function of the aminoacyl-tRNA binding site. In Chlamydia felis (strain Fe/C-56) (Chlamydophila felis), this protein is Large ribosomal subunit protein bL19.